Reading from the N-terminus, the 81-residue chain is Large ribosomal subunit protein bL31 (81 aa).

Belongs to the bacterial ribosomal protein bL31 family. Type A subfamily. As to quaternary structure, part of the 50S ribosomal subunit.

Functionally, binds the 23S rRNA. This Synechocystis sp. (strain ATCC 27184 / PCC 6803 / Kazusa) protein is Large ribosomal subunit protein bL31.